A 237-amino-acid polypeptide reads, in one-letter code: Uridylate kinase (237 aa).

11-14 (KLSG) contributes to the ATP binding site. Gly-53 contributes to the UMP binding site. ATP contacts are provided by Gly-54 and Arg-58. UMP is bound by residues Asp-73 and 134 to 141 (TGNPFFTT). Residues Thr-161, Tyr-167, and Asp-170 each coordinate ATP.

It belongs to the UMP kinase family. As to quaternary structure, homohexamer.

It is found in the cytoplasm. It carries out the reaction UMP + ATP = UDP + ADP. It participates in pyrimidine metabolism; CTP biosynthesis via de novo pathway; UDP from UMP (UMPK route): step 1/1. Its activity is regulated as follows. Inhibited by UTP. Catalyzes the reversible phosphorylation of UMP to UDP. The protein is Uridylate kinase of Burkholderia lata (strain ATCC 17760 / DSM 23089 / LMG 22485 / NCIMB 9086 / R18194 / 383).